The sequence spans 248 residues: Putative transposase YncI (248 aa).

It belongs to the transposase 11 family.

This Escherichia coli (strain K12) protein is Putative transposase YncI (yncI).